A 614-amino-acid polypeptide reads, in one-letter code: UvrABC system protein C (614 aa).

The GIY-YIG domain maps to 19–97; sequence SLPGCYLWKN…IKKYNPKFNV (79 aa). Residues 208-243 enclose the UVR domain; that stretch reads ERLVADLKKAMMDASSKMEYERAGFLKQRIEKINQL.

It belongs to the UvrC family. In terms of assembly, interacts with UvrB in an incision complex.

Its subcellular location is the cytoplasm. Functionally, the UvrABC repair system catalyzes the recognition and processing of DNA lesions. UvrC both incises the 5' and 3' sides of the lesion. The N-terminal half is responsible for the 3' incision and the C-terminal half is responsible for the 5' incision. This Leptospira biflexa serovar Patoc (strain Patoc 1 / Ames) protein is UvrABC system protein C.